The primary structure comprises 369 residues: Iron-sulfur cluster carrier protein (369 aa).

115–122 contributes to the ATP binding site; the sequence is GKGGVGKS.

Belongs to the Mrp/NBP35 ATP-binding proteins family. In terms of assembly, homodimer. Holo-ApbC forms a mixture of homodimers and homotetramers.

In terms of biological role, binds and transfers iron-sulfur (Fe-S) clusters to target apoproteins. Can hydrolyze ATP. Both activities are required for function in vivo, but the ability to hydrolyze ATP is not necessary for Fe-S cluster transfer. This chain is Iron-sulfur cluster carrier protein, found in Salmonella typhimurium (strain LT2 / SGSC1412 / ATCC 700720).